The following is an 83-amino-acid chain: Tetracenomycin polyketide synthase acyl carrier protein (83 aa).

A Carrier domain is found at 3–83 (QIGLPRLVEI…VNTETAGEVA (81 aa)). Position 41 is an O-(pantetheine 4'-phosphoryl)serine (serine 41).

The tetracenomycin polyketide synthase (TCM PKS) is composed of a ketosynthase complex (TcmKL), an acyl carrier protein (TcmM), a cyclase (TcmN) and a probable second cyclase (TcmJ). Requires pantetheine 4'-phosphate as cofactor. Post-translationally, 4'-phosphopantetheine is transferred from CoA to a specific serine of apo-ACP.

It carries out the reaction 10 malonyl-CoA + 8 H(+) = tetracenomycin F2 + 10 CO2 + 10 CoA + 2 H2O. It participates in antibiotic biosynthesis; tetracenomycin C biosynthesis. In terms of biological role, involved in the biosynthesis of tetracenomycin C (TCM C). Part of a type II polyketide synthase (PKS) that catalyzes the synthesis of tetracenomycin F2 (TCM F2), a precursor of TCM C, from malonyl-CoA. TcmM is an acyl carrier protein that serves as an acceptor of malonate from malonyl-CoA and acts as the tether for the substrates and intermediates of polyketide assembly. The malonyl CoA-acyl carrier protein transacylase FabD (MCT) is required to catalyze the transacylation between malonyl-CoA and TcmM, although a relatively slow spontaneous self-malonylation of TcmM also occurs in a reaction without the MCT. This chain is Tetracenomycin polyketide synthase acyl carrier protein, found in Streptomyces glaucescens.